The following is a 282-amino-acid chain: MAAAAINAAAPPPPVAPTAPPPPPPPPLSQASGRLPSRVLELVFSYLDLPDLRSCGLVCKHWYRCLHGDENSEVWRSLCGRIVSEEALRTDILCNLPTYKAKMRAFQHGFSSSDCSRNVYIKKNGFTLHRNPIAQSTDGARTKIGFSEGRHAWEVWWEGPLGTVAVIGIATKRAPMQCQGYVALLGSDDQSWGWNLVDNNLLHNGEVNGSFPQCNNAPKYQIGERIRVILDMEDKTLAFERGYEFLGVAFRGLPKTCLYPAVSAVYGNTEVTLVYLGKPLDG.

Residues 1-32 (MAAAAINAAAPPPPVAPTAPPPPPPPPLSQAS) are disordered. Pro residues predominate over residues 10–28 (APPPPVAPTAPPPPPPPPL). The region spanning 29 to 78 (SQASGRLPSRVLELVFSYLDLPDLRSCGLVCKHWYRCLHGDENSEVWRSL) is the F-box domain. The B30.2/SPRY domain maps to 88–280 (LRTDILCNLP…VTLVYLGKPL (193 aa)).

It belongs to the FBXO45/Fsn family. In terms of assembly, probable component of a E3 ubiquitin ligase complex.

It functions in the pathway protein modification; protein ubiquitination. This is F-box/SPRY domain-containing protein 1 (fbxo45) from Xenopus tropicalis (Western clawed frog).